Consider the following 227-residue polypeptide: Cytochrome c oxidase subunit 2 (227 aa).

Topologically, residues 1–14 (MAYPFQLGLQDATS) are mitochondrial intermembrane. The chain crosses the membrane as a helical span at residues 15-45 (PIMEELTSFHDHTLMIVFLISSLVLYIILLM). Over 46 to 59 (LTTKLTHTSTMDAQ) the chain is Mitochondrial matrix. Residues 60 to 87 (EVETIWTILPAVILILIALPSLRILYMM) form a helical membrane-spanning segment. Residues 88-227 (DEINNPALTV…HFENWSASMI (140 aa)) lie on the Mitochondrial intermembrane side of the membrane. His161, Cys196, Glu198, Cys200, His204, and Met207 together coordinate Cu cation. Position 198 (Glu198) interacts with Mg(2+).

The protein belongs to the cytochrome c oxidase subunit 2 family. In terms of assembly, component of the cytochrome c oxidase (complex IV, CIV), a multisubunit enzyme composed of 14 subunits. The complex is composed of a catalytic core of 3 subunits MT-CO1, MT-CO2 and MT-CO3, encoded in the mitochondrial DNA, and 11 supernumerary subunits COX4I, COX5A, COX5B, COX6A, COX6B, COX6C, COX7A, COX7B, COX7C, COX8 and NDUFA4, which are encoded in the nuclear genome. The complex exists as a monomer or a dimer and forms supercomplexes (SCs) in the inner mitochondrial membrane with NADH-ubiquinone oxidoreductase (complex I, CI) and ubiquinol-cytochrome c oxidoreductase (cytochrome b-c1 complex, complex III, CIII), resulting in different assemblies (supercomplex SCI(1)III(2)IV(1) and megacomplex MCI(2)III(2)IV(2)). Found in a complex with TMEM177, COA6, COX18, COX20, SCO1 and SCO2. Interacts with TMEM177 in a COX20-dependent manner. Interacts with COX20. Interacts with COX16. The cofactor is Cu cation.

Its subcellular location is the mitochondrion inner membrane. It catalyses the reaction 4 Fe(II)-[cytochrome c] + O2 + 8 H(+)(in) = 4 Fe(III)-[cytochrome c] + 2 H2O + 4 H(+)(out). Component of the cytochrome c oxidase, the last enzyme in the mitochondrial electron transport chain which drives oxidative phosphorylation. The respiratory chain contains 3 multisubunit complexes succinate dehydrogenase (complex II, CII), ubiquinol-cytochrome c oxidoreductase (cytochrome b-c1 complex, complex III, CIII) and cytochrome c oxidase (complex IV, CIV), that cooperate to transfer electrons derived from NADH and succinate to molecular oxygen, creating an electrochemical gradient over the inner membrane that drives transmembrane transport and the ATP synthase. Cytochrome c oxidase is the component of the respiratory chain that catalyzes the reduction of oxygen to water. Electrons originating from reduced cytochrome c in the intermembrane space (IMS) are transferred via the dinuclear copper A center (CU(A)) of subunit 2 and heme A of subunit 1 to the active site in subunit 1, a binuclear center (BNC) formed by heme A3 and copper B (CU(B)). The BNC reduces molecular oxygen to 2 water molecules using 4 electrons from cytochrome c in the IMS and 4 protons from the mitochondrial matrix. The chain is Cytochrome c oxidase subunit 2 (MT-CO2) from Anisomys imitator (Uneven-toothed rat).